Here is a 231-residue protein sequence, read N- to C-terminus: ATP-dependent dethiobiotin synthetase BioD 2 (231 aa).

13–18 (SVGKTV) serves as a coordination point for ATP. Mg(2+) is bound at residue Thr-17. Residue Lys-38 is part of the active site. ATP is bound by residues Asp-55, 112 to 115 (EGTG), 172 to 173 (NR), 201 to 203 (PYL), and Gln-208. Mg(2+) contacts are provided by Asp-55 and Glu-112.

This sequence belongs to the dethiobiotin synthetase family. Homodimer. Mg(2+) serves as cofactor.

It localises to the cytoplasm. It carries out the reaction (7R,8S)-7,8-diammoniononanoate + CO2 + ATP = (4R,5S)-dethiobiotin + ADP + phosphate + 3 H(+). Its pathway is cofactor biosynthesis; biotin biosynthesis; biotin from 7,8-diaminononanoate: step 1/2. In terms of biological role, catalyzes a mechanistically unusual reaction, the ATP-dependent insertion of CO2 between the N7 and N8 nitrogen atoms of 7,8-diaminopelargonic acid (DAPA, also called 7,8-diammoniononanoate) to form a ureido ring. In Salmonella typhi, this protein is ATP-dependent dethiobiotin synthetase BioD 2.